A 412-amino-acid chain; its full sequence is B3 domain-containing protein Os02g0683500 (412 aa).

Residues 1–87 are disordered; the sequence is MEFTTSSRFS…GGGGGGGGEA (87 aa). Over residues 30–65 the composition is skewed to low complexity; it reads TATAEAAPAPTSSSSSPAHHAASASASASASGSSTP. The segment covering 73–86 has biased composition (gly residues); it reads GASGSGGGGGGGGE. Residues 96–200 constitute a DNA-binding region (TF-B3); the sequence is FDKVVTPSDV…RHRLFIDWKR (105 aa). The disordered stretch occupies residues 374–412; it reads RLLELPPHHHHGAESSAASSPSSSSSSKRDAHSALDLDL. Over residues 387 to 399 the composition is skewed to low complexity; that stretch reads ESSAASSPSSSSS. The span at 400–412 shows a compositional bias: basic and acidic residues; it reads SKRDAHSALDLDL.

The protein localises to the nucleus. This Oryza sativa subsp. japonica (Rice) protein is B3 domain-containing protein Os02g0683500.